The following is a 238-amino-acid chain: Orotidine 5'-phosphate decarboxylase (238 aa).

Residues Asp10, Lys32, Asp59–Thr68, Thr122, Arg184, Gln193, Gly213, and Arg214 each bind substrate. Lys61 (proton donor) is an active-site residue.

Belongs to the OMP decarboxylase family. Type 1 subfamily. In terms of assembly, homodimer.

The catalysed reaction is orotidine 5'-phosphate + H(+) = UMP + CO2. Its pathway is pyrimidine metabolism; UMP biosynthesis via de novo pathway; UMP from orotate: step 2/2. In terms of biological role, catalyzes the decarboxylation of orotidine 5'-monophosphate (OMP) to uridine 5'-monophosphate (UMP). This chain is Orotidine 5'-phosphate decarboxylase, found in Bacillus cereus (strain B4264).